The chain runs to 87 residues: Kappa 1a-bungarotoxin (87 aa).

An N-terminal signal peptide occupies residues 1–21 (MKTLLLTLVVVTIVCLDLGYT). 5 cysteine pairs are disulfide-bonded: C24/C42, C35/C63, C48/C52, C67/C79, and C80/C85.

This sequence belongs to the three-finger toxin family. Long-chain subfamily. Kappa-neurotoxin sub-subfamily. In terms of assembly, homo- and heterodimer; non-covalently linked. As to expression, expressed by the venom gland.

The protein resides in the secreted. Its function is as follows. Postsynaptic neurotoxin that binds and inhibits neuronal nicotinic acetylcholine receptors (nAChR) with high affinity (IC(50)&lt;100 nM). Is a selective, and slowly reversible antagonist of alpha-3/CHRNA3-containing and some alpha-4/CHRNA4-containing AChRs. The sequence is that of Kappa 1a-bungarotoxin from Bungarus candidus (Malayan krait).